We begin with the raw amino-acid sequence, 65 residues long: Photosystem II reaction center protein H (65 aa).

The chain crosses the membrane as a helical span at residues 27–47 (GAVPVMAFIGVLLLVFLVIML).

The protein belongs to the PsbH family. As to quaternary structure, PSII is composed of 1 copy each of membrane proteins PsbA, PsbB, PsbC, PsbD, PsbE, PsbF, PsbH, PsbI, PsbJ, PsbK, PsbL, PsbM, PsbT, PsbX, PsbY, Psb30/Ycf12, peripheral proteins PsbO, CyanoQ (PsbQ), PsbU, PsbV and a large number of cofactors. It forms dimeric complexes.

Its subcellular location is the cellular thylakoid membrane. Functionally, one of the components of the core complex of photosystem II (PSII), required for its stability and/or assembly. PSII is a light-driven water:plastoquinone oxidoreductase that uses light energy to abstract electrons from H(2)O, generating O(2) and a proton gradient subsequently used for ATP formation. It consists of a core antenna complex that captures photons, and an electron transfer chain that converts photonic excitation into a charge separation. The protein is Photosystem II reaction center protein H of Prochlorococcus marinus (strain NATL1A).